Reading from the N-terminus, the 577-residue chain is Arginine--tRNA ligase (577 aa).

A 'HIGH' region motif is present at residues 122 to 132 (PNVAKEMHVGH).

This sequence belongs to the class-I aminoacyl-tRNA synthetase family. In terms of assembly, monomer.

It localises to the cytoplasm. The catalysed reaction is tRNA(Arg) + L-arginine + ATP = L-arginyl-tRNA(Arg) + AMP + diphosphate. In Enterobacter sp. (strain 638), this protein is Arginine--tRNA ligase.